The sequence spans 206 residues: Large ribosomal subunit protein mL62 (206 aa).

The transit peptide at 1-29 (MATAWCLPWTLRRAGAWLLTPPLRCPRRA) directs the protein to the mitochondrion.

Belongs to the prokaryotic/mitochondrial release factor family. Mitochondrion-specific ribosomal protein mL62 subfamily. As to quaternary structure, component of the mitochondrial 39S ribosomal subunit.

Its subcellular location is the mitochondrion. The enzyme catalyses an N-acyl-L-alpha-aminoacyl-tRNA + H2O = an N-acyl-L-amino acid + a tRNA + H(+). Essential peptidyl-tRNA hydrolase component of the mitochondrial large ribosomal subunit. Acts as a codon-independent translation release factor that has lost all stop codon specificity and directs the termination of translation in mitochondrion, possibly in case of abortive elongation. May be involved in the hydrolysis of peptidyl-tRNAs that have been prematurely terminated and thus in the recycling of stalled mitochondrial ribosomes. The sequence is that of Large ribosomal subunit protein mL62 from Ailuropoda melanoleuca (Giant panda).